The sequence spans 411 residues: Tyrosine--tRNA ligase (411 aa).

Position 34 (tyrosine 34) interacts with L-tyrosine. The 'HIGH' region motif lies at 39 to 48; it reads CTATSLHIGS. Residues tyrosine 171 and glutamine 175 each contribute to the L-tyrosine site. Positions 231 to 235 match the 'KMSKS' region motif; it reads KMGKT. Lysine 234 is an ATP binding site. Residues 345-411 form the S4 RNA-binding domain; it reads ISAYKLFYNV…GKKRHILVKV (67 aa).

This sequence belongs to the class-I aminoacyl-tRNA synthetase family. TyrS type 1 subfamily. In terms of assembly, homodimer.

It is found in the cytoplasm. It carries out the reaction tRNA(Tyr) + L-tyrosine + ATP = L-tyrosyl-tRNA(Tyr) + AMP + diphosphate + H(+). Functionally, catalyzes the attachment of tyrosine to tRNA(Tyr) in a two-step reaction: tyrosine is first activated by ATP to form Tyr-AMP and then transferred to the acceptor end of tRNA(Tyr). The polypeptide is Tyrosine--tRNA ligase (Rickettsia typhi (strain ATCC VR-144 / Wilmington)).